The chain runs to 310 residues: Putative S-adenosyl-L-methionine-dependent methyltransferase Franean1_4929 (310 aa).

Residues 1-28 (MSRPSAPRGRTELRSIHERGHERGSAGV) form a disordered region. Basic and acidic residues predominate over residues 9–24 (GRTELRSIHERGHERG). Residues aspartate 136 and 165–166 (DL) contribute to the S-adenosyl-L-methionine site.

This sequence belongs to the UPF0677 family.

In terms of biological role, exhibits S-adenosyl-L-methionine-dependent methyltransferase activity. The protein is Putative S-adenosyl-L-methionine-dependent methyltransferase Franean1_4929 of Parafrankia sp. (strain EAN1pec).